Reading from the N-terminus, the 254-residue chain is Aspartate/glutamate leucyltransferase (254 aa).

The protein belongs to the R-transferase family. Bpt subfamily.

The protein localises to the cytoplasm. It catalyses the reaction N-terminal L-glutamyl-[protein] + L-leucyl-tRNA(Leu) = N-terminal L-leucyl-L-glutamyl-[protein] + tRNA(Leu) + H(+). The enzyme catalyses N-terminal L-aspartyl-[protein] + L-leucyl-tRNA(Leu) = N-terminal L-leucyl-L-aspartyl-[protein] + tRNA(Leu) + H(+). Functions in the N-end rule pathway of protein degradation where it conjugates Leu from its aminoacyl-tRNA to the N-termini of proteins containing an N-terminal aspartate or glutamate. This chain is Aspartate/glutamate leucyltransferase, found in Xylella fastidiosa (strain M23).